Consider the following 121-residue polypeptide: Large ribosomal subunit protein bL20 (121 aa).

The protein belongs to the bacterial ribosomal protein bL20 family.

In terms of biological role, binds directly to 23S ribosomal RNA and is necessary for the in vitro assembly process of the 50S ribosomal subunit. It is not involved in the protein synthesizing functions of that subunit. In Wolbachia sp. subsp. Drosophila simulans (strain wRi), this protein is Large ribosomal subunit protein bL20.